We begin with the raw amino-acid sequence, 905 residues long: Protein translocase subunit SecA (905 aa).

ATP contacts are provided by residues glutamine 86, 104–108 (GEGKT), and aspartate 499. Zn(2+) contacts are provided by cysteine 890, cysteine 892, cysteine 901, and histidine 902.

This sequence belongs to the SecA family. In terms of assembly, monomer and homodimer. Part of the essential Sec protein translocation apparatus which comprises SecA, SecYEG and auxiliary proteins SecDF-YajC and YidC. It depends on Zn(2+) as a cofactor.

The protein localises to the cell inner membrane. The protein resides in the cytoplasm. It catalyses the reaction ATP + H2O + cellular proteinSide 1 = ADP + phosphate + cellular proteinSide 2.. Functionally, part of the Sec protein translocase complex. Interacts with the SecYEG preprotein conducting channel. Has a central role in coupling the hydrolysis of ATP to the transfer of proteins into and across the cell membrane, serving both as a receptor for the preprotein-SecB complex and as an ATP-driven molecular motor driving the stepwise translocation of polypeptide chains across the membrane. This Rickettsia typhi (strain ATCC VR-144 / Wilmington) protein is Protein translocase subunit SecA.